We begin with the raw amino-acid sequence, 590 residues long: Aspartate--tRNA(Asp/Asn) ligase (590 aa).

Glutamate 182 serves as a coordination point for L-aspartate. The aspartate stretch occupies residues 206–209; the sequence is QLFK. Arginine 228 serves as a coordination point for L-aspartate. ATP is bound by residues 228–230 and glutamine 237; that span reads RDE. Residue histidine 454 coordinates L-aspartate. Glutamate 488 contributes to the ATP binding site. Arginine 495 provides a ligand contact to L-aspartate. 540-543 serves as a coordination point for ATP; that stretch reads GLDR.

This sequence belongs to the class-II aminoacyl-tRNA synthetase family. Type 1 subfamily. In terms of assembly, homodimer.

Its subcellular location is the cytoplasm. It carries out the reaction tRNA(Asx) + L-aspartate + ATP = L-aspartyl-tRNA(Asx) + AMP + diphosphate. Functionally, aspartyl-tRNA synthetase with relaxed tRNA specificity since it is able to aspartylate not only its cognate tRNA(Asp) but also tRNA(Asn). Reaction proceeds in two steps: L-aspartate is first activated by ATP to form Asp-AMP and then transferred to the acceptor end of tRNA(Asp/Asn). The protein is Aspartate--tRNA(Asp/Asn) ligase of Halothermothrix orenii (strain H 168 / OCM 544 / DSM 9562).